Reading from the N-terminus, the 356-residue chain is UDP-N-acetylglucosamine--N-acetylmuramyl-(pentapeptide) pyrophosphoryl-undecaprenol N-acetylglucosamine transferase (356 aa).

UDP-N-acetyl-alpha-D-glucosamine-binding positions include 12–14 (TGG), Asn124, Arg163, Ser188, Ile242, 261–266 (ALTVSE), and Gln287.

Belongs to the glycosyltransferase 28 family. MurG subfamily.

Its subcellular location is the cell inner membrane. It catalyses the reaction di-trans,octa-cis-undecaprenyl diphospho-N-acetyl-alpha-D-muramoyl-L-alanyl-D-glutamyl-meso-2,6-diaminopimeloyl-D-alanyl-D-alanine + UDP-N-acetyl-alpha-D-glucosamine = di-trans,octa-cis-undecaprenyl diphospho-[N-acetyl-alpha-D-glucosaminyl-(1-&gt;4)]-N-acetyl-alpha-D-muramoyl-L-alanyl-D-glutamyl-meso-2,6-diaminopimeloyl-D-alanyl-D-alanine + UDP + H(+). Its pathway is cell wall biogenesis; peptidoglycan biosynthesis. Functionally, cell wall formation. Catalyzes the transfer of a GlcNAc subunit on undecaprenyl-pyrophosphoryl-MurNAc-pentapeptide (lipid intermediate I) to form undecaprenyl-pyrophosphoryl-MurNAc-(pentapeptide)GlcNAc (lipid intermediate II). This chain is UDP-N-acetylglucosamine--N-acetylmuramyl-(pentapeptide) pyrophosphoryl-undecaprenol N-acetylglucosamine transferase, found in Ectopseudomonas mendocina (strain ymp) (Pseudomonas mendocina).